The chain runs to 338 residues: Lipoyl synthase (338 aa).

Positions 1-24 are disordered; the sequence is MTTVQEAVPNLIPTQDATPRPAPK. Residues C84, C89, C95, C110, C114, C117, and S324 each coordinate [4Fe-4S] cluster. A Radical SAM core domain is found at 96–313; the sequence is FSGGTATFMI…AEEGYKMGFK (218 aa).

It belongs to the radical SAM superfamily. Lipoyl synthase family. Requires [4Fe-4S] cluster as cofactor.

It localises to the cytoplasm. It carries out the reaction [[Fe-S] cluster scaffold protein carrying a second [4Fe-4S](2+) cluster] + N(6)-octanoyl-L-lysyl-[protein] + 2 oxidized [2Fe-2S]-[ferredoxin] + 2 S-adenosyl-L-methionine + 4 H(+) = [[Fe-S] cluster scaffold protein] + N(6)-[(R)-dihydrolipoyl]-L-lysyl-[protein] + 4 Fe(3+) + 2 hydrogen sulfide + 2 5'-deoxyadenosine + 2 L-methionine + 2 reduced [2Fe-2S]-[ferredoxin]. It participates in protein modification; protein lipoylation via endogenous pathway; protein N(6)-(lipoyl)lysine from octanoyl-[acyl-carrier-protein]: step 2/2. Catalyzes the radical-mediated insertion of two sulfur atoms into the C-6 and C-8 positions of the octanoyl moiety bound to the lipoyl domains of lipoate-dependent enzymes, thereby converting the octanoylated domains into lipoylated derivatives. The chain is Lipoyl synthase from Pseudomonas putida (strain W619).